Here is a 212-residue protein sequence, read N- to C-terminus: External core antigen (212 aa).

The N-terminal stretch at 1-19 (MQLFHLCLIISCSCPTVQA) is a signal peptide. An HBEAG region spans residues 25-27 (GWL). The segment at 172–212 (LPETTVVRRRGRSPRRRTPSPRRRRSKSPRRRRSQSRESQC) is disordered. Residues 178 to 205 (VRRRGRSPRRRTPSPRRRRSKSPRRRRS) show a composition bias toward basic residues. One copy of the 1; half-length repeat lies at 184 to 189 (SPRRRT). The tract at residues 184–205 (SPRRRTPSPRRRRSKSPRRRRS) is 3 X 7 AA repeats of S-P-R-R-R-R-S. The propeptide occupies 184 to 212 (SPRRRTPSPRRRRSKSPRRRRSQSRESQC). Tandem repeats lie at residues 191–197 (SPRRRRS) and 199–205 (SPRRRRS).

Belongs to the orthohepadnavirus precore antigen family. As to quaternary structure, homodimerizes. Post-translationally, phosphorylated. Cleaved by host furin.

It is found in the secreted. The protein localises to the host nucleus. Its function is as follows. May regulate immune response to the intracellular capsid in acting as a T-cell tolerogen, by having an immunoregulatory effect which prevents destruction of infected cells by cytotoxic T-cells. This immune regulation may predispose to chronicity during perinatal infections and prevent severe liver injury during adult infections. In Hepatitis B virus genotype C subtype adr (isolate Japan/Nishioka/1983) (HBV-C), this protein is External core antigen.